The following is a 71-amino-acid chain: Beta-defensin 25 (71 aa).

The N-terminal stretch at 1–22 is a signal peptide; the sequence is MAKWILLIVALLVLGHVPSGST. Disulfide bonds link C27-C54, C34-C48, and C38-C55.

The protein belongs to the beta-defensin family.

Its subcellular location is the secreted. In terms of biological role, has antibacterial activity. This is Beta-defensin 25 (Defb25) from Rattus norvegicus (Rat).